Here is a 301-residue protein sequence, read N- to C-terminus: HPr kinase/phosphorylase (301 aa).

Catalysis depends on residues His-134 and Lys-155. 149–156 (GKSGLGKS) is a binding site for ATP. Ser-156 serves as a coordination point for Mg(2+). Asp-173 functions as the Proton acceptor; for phosphorylation activity. Proton donor; for dephosphorylation activity in the catalytic mechanism. Positions 196-205 (LEVRGLGIIN) are important for the catalytic mechanism of both phosphorylation and dephosphorylation. Glu-197 serves as a coordination point for Mg(2+). Arg-239 is a catalytic residue. The segment at 260 to 265 (PITPGK) is important for the catalytic mechanism of dephosphorylation.

It belongs to the HPrK/P family. Homohexamer. The cofactor is Mg(2+).

It carries out the reaction [HPr protein]-L-serine + ATP = [HPr protein]-O-phospho-L-serine + ADP + H(+). The enzyme catalyses [HPr protein]-O-phospho-L-serine + phosphate + H(+) = [HPr protein]-L-serine + diphosphate. Functionally, catalyzes the ATP- as well as the pyrophosphate-dependent phosphorylation of a specific serine residue in HPr, a phosphocarrier protein of the phosphoenolpyruvate-dependent sugar phosphotransferase system (PTS). HprK/P also catalyzes the pyrophosphate-producing, inorganic phosphate-dependent dephosphorylation (phosphorolysis) of seryl-phosphorylated HPr (P-Ser-HPr). The two antagonistic activities of HprK/P are regulated by several intracellular metabolites, which change their concentration in response to the absence or presence of rapidly metabolisable carbon sources (glucose, fructose, etc.) in the growth medium. Therefore, by controlling the phosphorylation state of HPr, HPrK/P is a sensor enzyme that plays a major role in the regulation of carbon metabolism and sugar transport: it mediates carbon catabolite repression (CCR), and regulates PTS-catalyzed carbohydrate uptake and inducer exclusion. This is HPr kinase/phosphorylase from Malacoplasma penetrans (strain HF-2) (Mycoplasma penetrans).